The primary structure comprises 142 residues: Hemoglobin subunit alpha (142 aa).

The region spanning 2–142 (VLSSADKNNV…VSTVLTSKYR (141 aa)) is the Globin domain. Position 4 is a phosphoserine (Ser-4). N6-succinyllysine is present on residues Lys-8 and Lys-12. Lys-17 carries the N6-acetyllysine; alternate modification. Lys-17 is modified (N6-succinyllysine; alternate). Position 25 is a phosphotyrosine (Tyr-25). Ser-36 is modified (phosphoserine). Lys-41 is modified (N6-succinyllysine). Phosphoserine is present on Ser-50. An O2-binding site is contributed by His-59. His-88 is a heme b binding site. Phosphoserine is present on Ser-103. Thr-109 bears the Phosphothreonine mark. Ser-125 bears the Phosphoserine mark. Thr-135 and Thr-138 each carry phosphothreonine. Phosphoserine is present on Ser-139.

The protein belongs to the globin family. In terms of assembly, heterotetramer of two alpha chains and two beta chains. In terms of tissue distribution, red blood cells.

Involved in oxygen transport from the lung to the various peripheral tissues. In terms of biological role, hemopressin acts as an antagonist peptide of the cannabinoid receptor CNR1. Hemopressin-binding efficiently blocks cannabinoid receptor CNR1 and subsequent signaling. This is Hemoglobin subunit alpha (HBA) from Panthera onca (Jaguar).